A 132-amino-acid polypeptide reads, in one-letter code: Fluoride-specific ion channel FluC 3 (132 aa).

4 helical membrane-spanning segments follow: residues 4–24 (ILLVGIGGFIGATLRYVFGGW), 32–52 (FPVGTLTINTIGSFFLGLIMY), 66–86 (IFLTIGILGAFTTLSTFGYES), and 95–115 (LMLMSINVVSTVLFSMMAVYL). Na(+) contacts are provided by G74 and T77.

Belongs to the fluoride channel Fluc/FEX (TC 1.A.43) family.

Its subcellular location is the cell membrane. It carries out the reaction fluoride(in) = fluoride(out). Its activity is regulated as follows. Na(+) is not transported, but it plays an essential structural role and its presence is essential for fluoride channel function. In terms of biological role, fluoride-specific ion channel. Important for reducing fluoride concentration in the cell, thus reducing its toxicity. In Methanosarcina barkeri (strain Fusaro / DSM 804), this protein is Fluoride-specific ion channel FluC 3.